The sequence spans 109 residues: Large ribosomal subunit protein uL23 (109 aa).

It belongs to the universal ribosomal protein uL23 family. Part of the 50S ribosomal subunit. Contacts protein L29, and trigger factor when it is bound to the ribosome.

One of the early assembly proteins it binds 23S rRNA. One of the proteins that surrounds the polypeptide exit tunnel on the outside of the ribosome. Forms the main docking site for trigger factor binding to the ribosome. This is Large ribosomal subunit protein uL23 from Haemophilus influenzae (strain PittEE).